Consider the following 151-residue polypeptide: U1 small nuclear ribonucleoprotein C (151 aa).

The Matrin-type zinc-finger motif lies at 4 to 36; that stretch reads YYCDYCDTYLTHDSPSVRKTHCTGRKHKDNVKF.

Belongs to the U1 small nuclear ribonucleoprotein C family. U1 snRNP is composed of the 7 core Sm proteins B/B', D1, D2, D3, E, F and G that assemble in a heptameric protein ring on the Sm site of the small nuclear RNA to form the core snRNP, and at least 3 U1 snRNP-specific proteins U1-70K, U1-A and U1-C. U1-C interacts with U1 snRNA and the 5' splice-site region of the pre-mRNA.

It is found in the nucleus. Functionally, component of the spliceosomal U1 snRNP, which is essential for recognition of the pre-mRNA 5' splice-site and the subsequent assembly of the spliceosome. U1-C is directly involved in initial 5' splice-site recognition for both constitutive and regulated alternative splicing. The interaction with the 5' splice-site seems to precede base-pairing between the pre-mRNA and the U1 snRNA. Stimulates commitment or early (E) complex formation by stabilizing the base pairing of the 5' end of the U1 snRNA and the 5' splice-site region. The chain is U1 small nuclear ribonucleoprotein C from Anopheles darlingi (Mosquito).